The sequence spans 168 residues: Protein DESIGUAL 2 (168 aa).

Positions 1-20 are cleaved as a signal peptide; that stretch reads MARNVGFFICILILAMDVSA. The next 3 membrane-spanning stretches (helical) occupy residues 56 to 76, 94 to 114, and 133 to 153; these read LAAC…GGCL, AVAS…MLIV, and VLSI…AYYI.

The protein belongs to the DESIGUAL family. Mainly expressed in roots, inflorescences and developing leaves, and, at low levels, in mature leaves.

It localises to the endoplasmic reticulum membrane. In terms of biological role, involved, partially redundantly with VCC/DEAL1 and DEAL3, to ensure bilateral symmetry development and early leaf margin patterning, probably via the regulation of auxin and CUC2 distribution. The polypeptide is Protein DESIGUAL 2 (Arabidopsis thaliana (Mouse-ear cress)).